Here is a 232-residue protein sequence, read N- to C-terminus: Demethylmenaquinone methyltransferase (232 aa).

Residues Thr-58, Asp-79, and 104–105 (NA) contribute to the S-adenosyl-L-methionine site.

It belongs to the class I-like SAM-binding methyltransferase superfamily. MenG/UbiE family.

The catalysed reaction is a 2-demethylmenaquinol + S-adenosyl-L-methionine = a menaquinol + S-adenosyl-L-homocysteine + H(+). It participates in quinol/quinone metabolism; menaquinone biosynthesis; menaquinol from 1,4-dihydroxy-2-naphthoate: step 2/2. Functionally, methyltransferase required for the conversion of demethylmenaquinol (DMKH2) to menaquinol (MKH2). The chain is Demethylmenaquinone methyltransferase from Bacillus licheniformis (strain ATCC 14580 / DSM 13 / JCM 2505 / CCUG 7422 / NBRC 12200 / NCIMB 9375 / NCTC 10341 / NRRL NRS-1264 / Gibson 46).